Consider the following 367-residue polypeptide: E3 ubiquitin-protein ligase RGLG3 (367 aa).

The region spanning 37-257 is the VWFA domain; the sequence is NLILGIDFTK…KEAAFALAAL (221 aa). Residues 323–356 form an RING-type zinc finger; the sequence is CPICLTNPKDMAFSCGHTTCKECGVVITTCPLCR.

As to quaternary structure, interacts with UBC30, GRXS17 and GLB3. Binds to and coactivates GAF1/IDD2 and ENY/IDD1. As to expression, widely expressed.

It localises to the cytoplasm. The protein resides in the nucleus. The enzyme catalyses S-ubiquitinyl-[E2 ubiquitin-conjugating enzyme]-L-cysteine + [acceptor protein]-L-lysine = [E2 ubiquitin-conjugating enzyme]-L-cysteine + N(6)-ubiquitinyl-[acceptor protein]-L-lysine.. Possesses E3 ubiquitin-protein ligase in vitro. Acts as upstream modulator of jasmonate (JA) signaling in response to various stimuli, such as JA-inhibited root growth, JA-inductive gene expression, coronatine-mediated pathogen susceptibility, wound-stimulated expression of JA-responsive genes and wound-induced JA biosynthesis. Controls fumonisin B1 (FB1)-triggered programmed cell death (PCD) by modulating the JA signaling pathway. May mediate salicylic acid (SA) suppression of JA signaling in FB1-induced responses. May mediate the formation of 'Lys-48'-linked multiubiquitin chains. Mediates the polyubiquitination and subsequent proteasomal degradation of the target protein GRXS17. The protein is E3 ubiquitin-protein ligase RGLG3 of Arabidopsis thaliana (Mouse-ear cress).